A 629-amino-acid chain; its full sequence is Pentatricopeptide repeat-containing protein At1g62930, chloroplastic (629 aa).

The transit peptide at 1 to 41 (MTSCVHLGIVASQSKKMSLAKRFAQLRKASPLFSLRGVYFS) directs the protein to the chloroplast. 15 PPR repeats span residues 79–113 (SIVE…RISY), 114–148 (DLYS…GYEP), 149–183 (DIVT…EYQP), 184–218 (NTVT…GCQP), 219–253 (DLFT…KIEA), 254–288 (DVVI…GIRP), 289–323 (NVVT…KINP), 324–358 (NVVT…SIDP), 359–393 (DIFT…DCFP), 394–428 (NVVT…GLVG), 429–463 (NTVT…GVPP), 464–498 (DIIT…KMEP), 499–533 (DIYT…GVKP), 534–568 (NVII…GTLP), and 569–603 (NSGT…GFVG).

The protein belongs to the PPR family. P subfamily.

It is found in the plastid. Its subcellular location is the chloroplast. This is Pentatricopeptide repeat-containing protein At1g62930, chloroplastic from Arabidopsis thaliana (Mouse-ear cress).